A 253-amino-acid chain; its full sequence is 5'-nucleotidase SurE (253 aa).

Residues Asp-8, Asp-9, Ser-40, and Asn-93 each coordinate a divalent metal cation.

It belongs to the SurE nucleotidase family. Requires a divalent metal cation as cofactor.

It localises to the cytoplasm. The enzyme catalyses a ribonucleoside 5'-phosphate + H2O = a ribonucleoside + phosphate. Nucleotidase that shows phosphatase activity on nucleoside 5'-monophosphates. This chain is 5'-nucleotidase SurE, found in Haemophilus ducreyi (strain 35000HP / ATCC 700724).